The primary structure comprises 158 residues: Probable cyclic pyranopterin monophosphate synthase (158 aa).

Substrate contacts are provided by residues 75–77 (MCH) and 111–112 (ME). Residue Asp-126 is part of the active site.

It belongs to the MoaC family. In terms of assembly, homohexamer; trimer of dimers.

It catalyses the reaction (8S)-3',8-cyclo-7,8-dihydroguanosine 5'-triphosphate = cyclic pyranopterin phosphate + diphosphate. Its pathway is cofactor biosynthesis; molybdopterin biosynthesis. Catalyzes the conversion of (8S)-3',8-cyclo-7,8-dihydroguanosine 5'-triphosphate to cyclic pyranopterin monophosphate (cPMP). In Methanocorpusculum labreanum (strain ATCC 43576 / DSM 4855 / Z), this protein is Probable cyclic pyranopterin monophosphate synthase.